The primary structure comprises 205 residues: Golgi to ER traffic protein 1 (205 aa).

Over 1 to 9 the chain is Lumenal; sequence MFELQPSSI. The chain crosses the membrane as a helical span at residues 10 to 29; the sequence is VVLVFCVLAIKVCISLIGKT. Residues 30 to 116 are Cytoplasmic-facing; that stretch reads TIQDRIWYLY…QISKLVNLAI (87 aa). Residues 53–103 adopt a coiled-coil conformation; it reads ALAQKREELVRVNKERRAISAQDEYAKWTKLNRQFDKLNSEVNDLAEATSS. Residues 117-137 form a helical membrane-spanning segment; that stretch reads AATTTAPIWFSRIWYRKVVLF. Topologically, residues 138–161 are lumenal; the sequence is YLPPKVFPYYIEWVLALPFIVTGG. The helical transmembrane segment at 162 to 178 threads the bilayer; sequence VGLTVWMFALNSVLSSL. Residues 179–205 are Cytoplasmic-facing; that stretch reads EFLIKFYLEEPVKKPEAPAASEAQTKQ.

The protein belongs to the WRB/GET1 family. As to quaternary structure, component of the Golgi to ER traffic (GET) complex, which is composed of GET1, GET2 and GET3. Within the complex, GET1 and GET2 form a heterotetramer which is stabilized by phosphatidylinositol binding and which binds to the GET3 homodimer.

The protein localises to the endoplasmic reticulum membrane. Its subcellular location is the golgi apparatus membrane. Its function is as follows. Required for the post-translational delivery of tail-anchored (TA) proteins to the endoplasmic reticulum. Together with GET2, acts as a membrane receptor for soluble GET3, which recognizes and selectively binds the transmembrane domain of TA proteins in the cytosol. The GET complex cooperates with the HDEL receptor ERD2 to mediate the ATP-dependent retrieval of resident ER proteins that contain a C-terminal H-D-E-L retention signal from the Golgi to the ER. In Clavispora lusitaniae (strain ATCC 42720) (Yeast), this protein is Golgi to ER traffic protein 1.